We begin with the raw amino-acid sequence, 383 residues long: Galactokinase (383 aa).

34 to 37 (EHTD) serves as a coordination point for substrate. 124–130 (GAGLSSS) provides a ligand contact to ATP. Residues S130 and E162 each coordinate Mg(2+). D174 acts as the Proton acceptor in catalysis. Residue Y223 coordinates substrate.

Belongs to the GHMP kinase family. GalK subfamily.

It localises to the cytoplasm. It catalyses the reaction alpha-D-galactose + ATP = alpha-D-galactose 1-phosphate + ADP + H(+). The protein operates within carbohydrate metabolism; galactose metabolism. Its function is as follows. Catalyzes the transfer of the gamma-phosphate of ATP to D-galactose to form alpha-D-galactose-1-phosphate (Gal-1-P). This chain is Galactokinase, found in Yersinia pseudotuberculosis serotype O:1b (strain IP 31758).